Here is a 79-residue protein sequence, read N- to C-terminus: uncharacterized protein (79 aa).

A signal peptide spans 1-18 (MQIKNIVAVLATVTAINA). The tract at residues 24 to 44 (PNATTPNATQPNATQPNTTLP) is disordered. 4 N-linked (GlcNAc...) asparagine glycosylation sites follow: Asn-25, Asn-30, Asn-35, and Asn-40. The GPI-anchor amidated glycine moiety is linked to residue Gly-55. A propeptide spans 56 to 79 (EAVVNTMAAGAFGAAIAAGVAFLF) (removed in mature form).

The protein resides in the cell membrane. This is an uncharacterized protein from Saccharomyces cerevisiae (strain ATCC 204508 / S288c) (Baker's yeast).